Consider the following 109-residue polypeptide: UPF0482 protein ESA_01750 (109 aa).

Residues 1–24 (MNKFLRHSLLLALLTGALSGVANA) form the signal peptide. Positions 38 to 55 (RTRQDAAMDKEQWNDTRS) are enriched in basic and acidic residues. Residues 38-63 (RTRQDAAMDKEQWNDTRSLRQKVNKR) form a disordered region.

Belongs to the UPF0482 family.

In Cronobacter sakazakii (strain ATCC BAA-894) (Enterobacter sakazakii), this protein is UPF0482 protein ESA_01750.